We begin with the raw amino-acid sequence, 83 residues long: uncharacterized protein (83 aa).

A helical transmembrane segment spans residues 50–70 (IMVFLGEAWIILIPFAIFCII).

It belongs to the plectrovirus ORF7 family.

Its subcellular location is the host membrane. This is an uncharacterized protein from Spiroplasma citri (SpV1).